A 307-amino-acid polypeptide reads, in one-letter code: N-acetylmuramic acid 6-phosphate etherase (307 aa).

The SIS domain maps to 60 to 223 (AAQAIARGGR…STGAMVRIGK (164 aa)). The active-site Proton donor is E88. E119 is an active-site residue.

It belongs to the GCKR-like family. MurNAc-6-P etherase subfamily. As to quaternary structure, homodimer.

It carries out the reaction N-acetyl-D-muramate 6-phosphate + H2O = N-acetyl-D-glucosamine 6-phosphate + (R)-lactate. Its pathway is amino-sugar metabolism; N-acetylmuramate degradation. In terms of biological role, specifically catalyzes the cleavage of the D-lactyl ether substituent of MurNAc 6-phosphate, producing GlcNAc 6-phosphate and D-lactate. This chain is N-acetylmuramic acid 6-phosphate etherase, found in Synechococcus elongatus (strain ATCC 33912 / PCC 7942 / FACHB-805) (Anacystis nidulans R2).